A 603-amino-acid chain; its full sequence is Thread biopolymer filament subunit gamma (603 aa).

The head stretch occupies residues 1–191; that stretch reads MASHSSVSYR…ENETMEEELK (191 aa). The IF rod domain maps to 158–476; the sequence is VKNILGTLNQ…KLLEGQELMV (319 aa). Residues 193 to 227 are coil 1A; it reads LTGGVPMSPDSTVNLENVETQVTEMLTEVSNLTLE. Residues 228-240 form a linker 1 region; the sequence is RVRLEIDVDHLRA. Positions 241–341 are coil 1B; it reads TADEIKSKYE…DALNVMREEY (101 aa). The linker 12 stretch occupies residues 342–362; it reads QQVVTKNVQEAETYCKMQIDQ. The coil 2A stretch occupies residues 363-381; that stretch reads IQGISTQTTEQISILDKEI. The tract at residues 382-389 is linker 2; it reads NTLEKELQ. The tract at residues 390 to 510 is coil 2B; it reads PLNVEYQRLL…SSVGYGASST (121 aa). The tract at residues 511–603 is tail; sequence TLGAISGGYS…GHDSTIILQQ (93 aa). The segment covering 562–587 has biased composition (low complexity); it reads SSSGGHSMYSSSSMKRSSSKSASASA. The tract at residues 562 to 603 is disordered; sequence SSSGGHSMYSSSSMKRSSSKSASASAGGYGTSGHDSTIILQQ.

Belongs to the intermediate filament family. Coiled-coil heterodimer of an alpha and a gamma subunit. Assemble into 10 nm filaments. Forms a massive, conical, intermediate filament biopolymer of approximately 60 cm.

Its subcellular location is the secreted. The protein localises to the extracellular space. Its function is as follows. Released extracellularly into seawater and provides physical and biological defense against invasive organism by modulation of the viscoelastic properties of mucus. The polypeptide is Thread biopolymer filament subunit gamma (Eptatretus stoutii (Pacific hagfish)).